Here is a 349-residue protein sequence, read N- to C-terminus: MKTNSEEQMIKLFGIPLSDKPRWQQFLICSSGFFFGYLVNGICEEYVYNRLKFSYGWYFTFAQGLVYIALIYMYGFRTKQMVNPWKTYVKLSGVLMGSHGLTKGSLAYLNYPAQIMFKSTKVLPVMVMGAFIPGLRRKYPVHEYISAMLLVIGLILFTLADAHTSPNFSIIGVMMISGALIMDAFLGNLQEAIFTMNPETTQMEMLFCSTVVGLPFLLAPMILTGELFTAWNSCAQHPYVYGVLVFEAMATFIGQVSVLSLIALFGAATTAMITTARKAVTLLLSYLIFTKPLTEQHGTGLLLIFMGIILKMVPDPNPNPKSSGSGQTPGKLERVKFEKEDDEESRPLV.

A run of 8 helical transmembrane segments spans residues 23–43 (WQQFLICSSGFFFGYLVNGIC), 56–76 (GWYFTFAQGLVYIALIYMYGF), 115–135 (IMFKSTKVLPVMVMGAFIPGL), 140–160 (PVHEYISAMLLVIGLILFTLA), 167–187 (NFSIIGVMMISGALIMDAFLG), 205–225 (MLFCSTVVGLPFLLAPMILTG), 248–268 (AMATFIGQVSVLSLIALFGAA), and 293–313 (LTEQHGTGLLLIFMGIILKMV). The interval 316-349 (PNPNPKSSGSGQTPGKLERVKFEKEDDEESRPLV) is disordered. The span at 340-349 (EDDEESRPLV) shows a compositional bias: acidic residues.

Belongs to the nucleotide-sugar transporter family. UDP-galactose:UMP antiporter (TC 2.A.7.11) subfamily.

Its subcellular location is the membrane. In terms of biological role, sugar transporter involved in the transport of nucleotide-sugars from cytoplasm into the Golgi and/or the endoplasmic reticulum. The chain is UDP-galactose/UDP-glucose transporter 4 from Arabidopsis thaliana (Mouse-ear cress).